The primary structure comprises 279 residues: Inorganic pyrophosphatase (279 aa).

R100 contributes to the diphosphate binding site. Residues D132, D137, and D169 each contribute to the Mg(2+) site.

Belongs to the PPase family. The cofactor is Mg(2+).

The enzyme catalyses diphosphate + H2O = 2 phosphate + H(+). In Dictyostelium discoideum (Social amoeba), this protein is Inorganic pyrophosphatase (ppa1).